We begin with the raw amino-acid sequence, 101 residues long: Urease subunit beta (101 aa).

The protein belongs to the urease beta subunit family. Heterotrimer of UreA (gamma), UreB (beta) and UreC (alpha) subunits. Three heterotrimers associate to form the active enzyme.

The protein localises to the cytoplasm. The catalysed reaction is urea + 2 H2O + H(+) = hydrogencarbonate + 2 NH4(+). It participates in nitrogen metabolism; urea degradation; CO(2) and NH(3) from urea (urease route): step 1/1. The sequence is that of Urease subunit beta from Burkholderia orbicola (strain MC0-3).